The sequence spans 317 residues: tRNA dimethylallyltransferase (317 aa).

Position 14–21 (14–21) interacts with ATP; it reads GPTASGKS. Residue 16-21 participates in substrate binding; sequence TASGKS. Interaction with substrate tRNA stretches follow at residues 39–42 and 163–167; these read DSVL and QRIQR.

This sequence belongs to the IPP transferase family. In terms of assembly, monomer. Mg(2+) is required as a cofactor.

It carries out the reaction adenosine(37) in tRNA + dimethylallyl diphosphate = N(6)-dimethylallyladenosine(37) in tRNA + diphosphate. Catalyzes the transfer of a dimethylallyl group onto the adenine at position 37 in tRNAs that read codons beginning with uridine, leading to the formation of N6-(dimethylallyl)adenosine (i(6)A). The polypeptide is tRNA dimethylallyltransferase (Xylella fastidiosa (strain 9a5c)).